The chain runs to 398 residues: Tryptophan synthase beta chain (398 aa).

Lys88 bears the N6-(pyridoxal phosphate)lysine mark.

Belongs to the TrpB family. In terms of assembly, tetramer of two alpha and two beta chains. Pyridoxal 5'-phosphate is required as a cofactor.

The enzyme catalyses (1S,2R)-1-C-(indol-3-yl)glycerol 3-phosphate + L-serine = D-glyceraldehyde 3-phosphate + L-tryptophan + H2O. It participates in amino-acid biosynthesis; L-tryptophan biosynthesis; L-tryptophan from chorismate: step 5/5. Its function is as follows. The beta subunit is responsible for the synthesis of L-tryptophan from indole and L-serine. The polypeptide is Tryptophan synthase beta chain (Actinobacillus succinogenes (strain ATCC 55618 / DSM 22257 / CCUG 43843 / 130Z)).